Here is a 216-residue protein sequence, read N- to C-terminus: Molybdenum cofactor guanylyltransferase (216 aa).

Residues 16 to 18, Lys28, Asn57, Asp73, and Asp108 each bind GTP; that span reads LAG. Asp108 serves as a coordination point for Mg(2+).

The protein belongs to the MobA family. In terms of assembly, monomer. Requires Mg(2+) as cofactor.

The protein localises to the cytoplasm. It carries out the reaction Mo-molybdopterin + GTP + H(+) = Mo-molybdopterin guanine dinucleotide + diphosphate. Its function is as follows. Transfers a GMP moiety from GTP to Mo-molybdopterin (Mo-MPT) cofactor (Moco or molybdenum cofactor) to form Mo-molybdopterin guanine dinucleotide (Mo-MGD) cofactor. In Rhizobium rhizogenes (strain K84 / ATCC BAA-868) (Agrobacterium radiobacter), this protein is Molybdenum cofactor guanylyltransferase.